We begin with the raw amino-acid sequence, 136 residues long: uncharacterized protein (136 aa).

4 helical membrane passes run 10–32 (SAGI…FIWI), 44–66 (LRCG…ILHF), 70–89 (VLLL…KTLL), and 102–124 (IAGV…WLLF).

It is found in the cell membrane. This is an uncharacterized protein from Archaeoglobus fulgidus (strain ATCC 49558 / DSM 4304 / JCM 9628 / NBRC 100126 / VC-16).